Reading from the N-terminus, the 86-residue chain is Toxin Tpa4 (86 aa).

An N-terminal signal peptide occupies residues 1–19 (MNYFVLIAVACLLTAGTES). The 62-residue stretch at 21–82 (KDGYPLEYDN…EPIKTSGRCR (62 aa)) folds into the LCN-type CS-alpha/beta domain. Disulfide bonds link Cys-31-Cys-81, Cys-35-Cys-57, Cys-43-Cys-64, and Cys-47-Cys-66. At Pro-83 the chain carries Proline amide.

Belongs to the long (4 C-C) scorpion toxin superfamily. Sodium channel inhibitor family. Alpha subfamily. Expressed by the venom gland.

The protein localises to the secreted. Functionally, alpha toxins bind voltage-independently at site-3 of sodium channels (Nav) and inhibit the inactivation of the activated channels, thereby blocking neuronal transmission. This is Toxin Tpa4 from Tityus pachyurus (Colombian scorpion).